The sequence spans 436 residues: tRNA pseudouridine synthase Pus10 (436 aa).

D254 functions as the Nucleophile in the catalytic mechanism. Substrate contacts are provided by Y322 and Y394.

It belongs to the pseudouridine synthase Pus10 family.

It carries out the reaction uridine(54) in tRNA = pseudouridine(54) in tRNA. The catalysed reaction is uridine(55) in tRNA = pseudouridine(55) in tRNA. Functionally, responsible for synthesis of pseudouridine from uracil-54 and uracil-55 in the psi GC loop of transfer RNAs. The sequence is that of tRNA pseudouridine synthase Pus10 from Methanopyrus kandleri (strain AV19 / DSM 6324 / JCM 9639 / NBRC 100938).